We begin with the raw amino-acid sequence, 348 residues long: Probable UDP-arabinopyranose mutase 5 (348 aa).

The short motif at 100–102 is the DXD motif element; that stretch reads DDD. Residue Arg-148 is glycosylated (N-linked (Glc...) arginine).

Belongs to the RGP family. Heteromers with RGP1 and RGP2. The cofactor is Mn(2+). It depends on Mg(2+) as a cofactor. In terms of processing, reversibly glycosylated in vitro by UDP-glucose, UDP-xylose and UDP-galactose, but not UDP-mannose. In terms of tissue distribution, widely expressed at low levels.

Its subcellular location is the cytoplasm. It is found in the cytosol. The protein resides in the golgi apparatus. It carries out the reaction UDP-beta-L-arabinofuranose = UDP-beta-L-arabinopyranose. In terms of biological role, probable UDP-L-arabinose mutase involved in the biosynthesis of cell wall non-cellulosic polysaccharides. This chain is Probable UDP-arabinopyranose mutase 5, found in Arabidopsis thaliana (Mouse-ear cress).